The chain runs to 359 residues: Phosphate acyltransferase (359 aa).

Belongs to the PlsX family. As to quaternary structure, homodimer. Probably interacts with PlsY.

Its subcellular location is the cytoplasm. The enzyme catalyses a fatty acyl-[ACP] + phosphate = an acyl phosphate + holo-[ACP]. Its pathway is lipid metabolism; phospholipid metabolism. Catalyzes the reversible formation of acyl-phosphate (acyl-PO(4)) from acyl-[acyl-carrier-protein] (acyl-ACP). This enzyme utilizes acyl-ACP as fatty acyl donor, but not acyl-CoA. The chain is Phosphate acyltransferase from Citrobacter koseri (strain ATCC BAA-895 / CDC 4225-83 / SGSC4696).